We begin with the raw amino-acid sequence, 177 residues long: Ribonuclease M5 (177 aa).

The Toprim domain maps to 5–99 (KQIIIVEGKT…NKTSKKIGIA (95 aa)). Residues Glu11, Asp59, and Asp61 each coordinate Mg(2+).

It belongs to the ribonuclease M5 family. It depends on Mg(2+) as a cofactor.

It is found in the cytoplasm. The enzyme catalyses Endonucleolytic cleavage of RNA, removing 21 and 42 nucleotides, respectively, from the 5'- and 3'-termini of a 5S-rRNA precursor.. Functionally, required for correct processing of both the 5' and 3' ends of 5S rRNA precursor. Cleaves both sides of a double-stranded region yielding mature 5S rRNA in one step. The chain is Ribonuclease M5 from Mycoplasma mycoides subsp. mycoides SC (strain CCUG 32753 / NCTC 10114 / PG1).